Reading from the N-terminus, the 335-residue chain is Trans-3-hydroxy-L-proline dehydratase (335 aa).

The Proton acceptor role is filled by C91. Residues 92–93 (GH), D251, and 256–257 (GS) each bind substrate.

This sequence belongs to the proline racemase family.

The catalysed reaction is trans-3-hydroxy-L-proline = 1-pyrroline-2-carboxylate + H2O. Catalyzes the dehydration of trans-3-hydroxy-L-proline (t3LHyp) to Delta(1)-pyrroline-2-carboxylate (Pyr2C). Is likely involved in a degradation pathway that converts t3LHyp to L-proline. Displays neither trans-4-hydroxy-L-proline (t4LHyp) epimerase nor proline racemase activity. In Burkholderia ambifaria (strain ATCC BAA-244 / DSM 16087 / CCUG 44356 / LMG 19182 / AMMD) (Burkholderia cepacia (strain AMMD)), this protein is Trans-3-hydroxy-L-proline dehydratase.